The following is a 204-amino-acid chain: dITP/XTP pyrophosphatase (204 aa).

8-13 (TKNAGK) provides a ligand contact to substrate. Residue Asp70 is the Proton acceptor of the active site. Asp70 lines the Mg(2+) pocket. Residues Ser71, 153–156 (FGYD), Lys176, and 181–182 (HR) each bind substrate.

It belongs to the HAM1 NTPase family. Homodimer. Requires Mg(2+) as cofactor.

The catalysed reaction is XTP + H2O = XMP + diphosphate + H(+). It carries out the reaction dITP + H2O = dIMP + diphosphate + H(+). The enzyme catalyses ITP + H2O = IMP + diphosphate + H(+). Pyrophosphatase that catalyzes the hydrolysis of nucleoside triphosphates to their monophosphate derivatives, with a high preference for the non-canonical purine nucleotides XTP (xanthosine triphosphate), dITP (deoxyinosine triphosphate) and ITP. Seems to function as a house-cleaning enzyme that removes non-canonical purine nucleotides from the nucleotide pool, thus preventing their incorporation into DNA/RNA and avoiding chromosomal lesions. The polypeptide is dITP/XTP pyrophosphatase (Geobacillus kaustophilus (strain HTA426)).